Here is a 336-residue protein sequence, read N- to C-terminus: Ferredoxin--NADP reductase (336 aa).

FAD is bound by residues E34, Q42, Y47, V87, F121, D286, and S326.

The protein belongs to the ferredoxin--NADP reductase type 2 family. In terms of assembly, homodimer. Requires FAD as cofactor.

The catalysed reaction is 2 reduced [2Fe-2S]-[ferredoxin] + NADP(+) + H(+) = 2 oxidized [2Fe-2S]-[ferredoxin] + NADPH. The protein is Ferredoxin--NADP reductase of Leuconostoc mesenteroides subsp. mesenteroides (strain ATCC 8293 / DSM 20343 / BCRC 11652 / CCM 1803 / JCM 6124 / NCDO 523 / NBRC 100496 / NCIMB 8023 / NCTC 12954 / NRRL B-1118 / 37Y).